The following is a 396-amino-acid chain: S-adenosylmethionine synthase (396 aa).

His-16 provides a ligand contact to ATP. Asp-18 serves as a coordination point for Mg(2+). Glu-44 provides a ligand contact to K(+). 2 residues coordinate L-methionine: Glu-57 and Gln-100. The flexible loop stretch occupies residues 100–110 (QSVDIAQGVDR). ATP contacts are provided by residues 165 to 167 (DAK), Asp-240, 246 to 247 (RK), Ala-263, and Lys-267. L-methionine is bound at residue Asp-240. Lys-271 lines the L-methionine pocket.

Belongs to the AdoMet synthase family. Homotetramer; dimer of dimers. Mg(2+) serves as cofactor. It depends on K(+) as a cofactor.

The protein localises to the cytoplasm. The catalysed reaction is L-methionine + ATP + H2O = S-adenosyl-L-methionine + phosphate + diphosphate. Its pathway is amino-acid biosynthesis; S-adenosyl-L-methionine biosynthesis; S-adenosyl-L-methionine from L-methionine: step 1/1. Catalyzes the formation of S-adenosylmethionine (AdoMet) from methionine and ATP. The overall synthetic reaction is composed of two sequential steps, AdoMet formation and the subsequent tripolyphosphate hydrolysis which occurs prior to release of AdoMet from the enzyme. The polypeptide is S-adenosylmethionine synthase (Pseudomonas savastanoi pv. phaseolicola (strain 1448A / Race 6) (Pseudomonas syringae pv. phaseolicola (strain 1448A / Race 6))).